Consider the following 36-residue polypeptide: F420-dependent NADP reductase (36 aa).

Residue 9–12 (TGNI) participates in NADP(+) binding.

This sequence belongs to the F420-dependent NADP reductase family. Homotetramer.

It catalyses the reaction reduced coenzyme F420-(gamma-L-Glu)(n) + NADP(+) = oxidized coenzyme F420-(gamma-L-Glu)(n) + NADPH + 2 H(+). Functionally, catalyzes the reduction of NADP(+) with F420H(2) via hydride transfer, and the reverse reaction, i.e. the reduction of F420 with NADPH. In M.organophilum, an alcohol-fermenting methanogen containing an NADP-dependent alcohol dehydrogenase, is probably involved in the regeneration of F420H(2) required for CO(2) reduction to methane. Thus, during growth on alcohol and CO(2), the F420-dependent NADP reductase probably has the function of coupling the NADP-dependent oxidation of the alcohol to the aldehyde with the F420-dependent reduction of CO(2) to methane. This chain is F420-dependent NADP reductase (fno), found in Methanogenium organophilum.